Here is a 393-residue protein sequence, read N- to C-terminus: S-adenosylmethionine synthase (393 aa).

His16 contributes to the ATP binding site. Asp18 contributes to the Mg(2+) binding site. Glu44 is a binding site for K(+). Residues Glu57 and Gln100 each contribute to the L-methionine site. Residues 100-110 (QSNDIAQGVDH) form a flexible loop region. ATP is bound by residues 167–169 (DAK), 238–239 (RF), Asp247, 253–254 (RK), Ala270, and Lys274. Residue Asp247 coordinates L-methionine. L-methionine is bound at residue Lys278.

It belongs to the AdoMet synthase family. In terms of assembly, homotetramer; dimer of dimers. Mg(2+) serves as cofactor. Requires K(+) as cofactor.

Its subcellular location is the cytoplasm. The enzyme catalyses L-methionine + ATP + H2O = S-adenosyl-L-methionine + phosphate + diphosphate. It participates in amino-acid biosynthesis; S-adenosyl-L-methionine biosynthesis; S-adenosyl-L-methionine from L-methionine: step 1/1. Catalyzes the formation of S-adenosylmethionine (AdoMet) from methionine and ATP. The overall synthetic reaction is composed of two sequential steps, AdoMet formation and the subsequent tripolyphosphate hydrolysis which occurs prior to release of AdoMet from the enzyme. The protein is S-adenosylmethionine synthase of Acidovorax ebreus (strain TPSY) (Diaphorobacter sp. (strain TPSY)).